The sequence spans 122 residues: Large ribosomal subunit protein uL14c (122 aa).

The protein belongs to the universal ribosomal protein uL14 family. As to quaternary structure, part of the 50S ribosomal subunit.

The protein localises to the plastid. It is found in the chloroplast. In terms of biological role, binds to 23S rRNA. This chain is Large ribosomal subunit protein uL14c, found in Physcomitrium patens (Spreading-leaved earth moss).